We begin with the raw amino-acid sequence, 53 residues long: Large ribosomal subunit protein bL33A (53 aa).

The protein belongs to the bacterial ribosomal protein bL33 family.

The sequence is that of Large ribosomal subunit protein bL33A (rpmG1) from Mycoplasma genitalium (strain ATCC 33530 / DSM 19775 / NCTC 10195 / G37) (Mycoplasmoides genitalium).